Reading from the N-terminus, the 538-residue chain is Phosphatidylethanolamine transferase Mcr-2 (538 aa).

A run of 5 helical transmembrane segments spans residues 14–34 (PFVL…LTFF), 47–67 (LGFI…IVVL), 72–92 (YVLK…SYFT), 121–141 (LAFF…VAVA), and 161–181 (VSLV…ASFF). Positions 244 and 283 each coordinate Zn(2+). 3 disulfide bridges follow: cysteine 279–cysteine 289, cysteine 354–cysteine 362, and cysteine 412–cysteine 420. At threonine 283 the chain carries Phosphothreonine. Positions 463 and 464 each coordinate Zn(2+).

Belongs to the phosphoethanolamine transferase family. Monomer. Post-translationally, phosphorylated at Thr-283; may represent an intermediate in the catalytic mechanism.

It localises to the cell inner membrane. The enzyme catalyses lipid A (E. coli) + a 1,2-diacyl-sn-glycero-3-phosphoethanolamine + H(+) = lipid A 4'-(2-aminoethyl diphosphate) (E. coli) + a 1,2-diacyl-sn-glycerol. Functionally, probably catalyzes the addition of a phosphoethanolamine moiety to lipid A. Phosphoethanolamine modification of lipid A confers polymyxin resistance. Confers resistance to polymyxin-type antibiotics such as colistin. The protein is Phosphatidylethanolamine transferase Mcr-2 of Escherichia coli.